The sequence spans 184 residues: Shikimate kinase (184 aa).

Position 17-22 (17-22 (GAGKTT)) interacts with ATP. Mg(2+) is bound at residue T21. D39, R63, and G85 together coordinate substrate. R123 provides a ligand contact to ATP. R142 provides a ligand contact to substrate.

Belongs to the shikimate kinase family. Monomer. The cofactor is Mg(2+).

Its subcellular location is the cytoplasm. The catalysed reaction is shikimate + ATP = 3-phosphoshikimate + ADP + H(+). It participates in metabolic intermediate biosynthesis; chorismate biosynthesis; chorismate from D-erythrose 4-phosphate and phosphoenolpyruvate: step 5/7. Catalyzes the specific phosphorylation of the 3-hydroxyl group of shikimic acid using ATP as a cosubstrate. This Burkholderia lata (strain ATCC 17760 / DSM 23089 / LMG 22485 / NCIMB 9086 / R18194 / 383) protein is Shikimate kinase.